The chain runs to 66 residues: Disintegrin EO5B (66 aa).

Residues 1-65 (NSAHPCCDPV…DCPRNPYKGK (65 aa)) form the Disintegrin domain. 4 disulfide bridges follow: C6–C29, C20–C26, C25–C50, and C38–C57. The Cell attachment site; atypical (VGD) signature appears at 42–44 (VGD).

The protein belongs to the disintegrin family. Dimeric disintegrin subfamily. In terms of assembly, heterodimer with EO4A or EO5A; disulfide-linked. As to expression, expressed by the venom gland.

It localises to the secreted. In terms of biological role, poor inhibitor of platelet aggregation. When it dimerizes with EO4A, it inhibits the adhesion of cells expressing the RGD-dependent integrin alpha-5/beta-1 (ITGA5/ITGB1) to immobilized fibronectin. When it dimerizes with EO5A, it inhibits the adhesion of the alpha-4/beta-1 (ITGA4/ITGB1) integrin to VCAM-1. When it dimerizes either with EO4A or EO5A, the inhibition on alpha-IIb/beta-3 (ITGA2B/ITGB3) is low. The polypeptide is Disintegrin EO5B (Echis ocellatus (Ocellated saw-scaled viper)).